Here is a 445-residue protein sequence, read N- to C-terminus: Crotonyl-CoA reductase (445 aa).

Glu149 serves as a coordination point for Zn(2+).

This sequence belongs to the zinc-containing alcohol dehydrogenase family. Crotonyl-CoA carboxylase/reductase subfamily. In terms of assembly, homodimer. Zn(2+) is required as a cofactor.

It carries out the reaction butanoyl-CoA + NADP(+) = (2E)-butenoyl-CoA + NADPH + H(+). With respect to regulation, inhibited by NADPH at concentrations above 200 uM, by MgCl (30%), by ZnCl(2) (55%), and by CoCl, MnCl and CaCl (100%). Also inhibited by iodoacetamide, N-ethylmaleamide, the thiol group inhibitor beta-chloromercuribenzoate, palmitoyl-CoA and myristoyl-CoA. In terms of biological role, catalyzes the conversion of crotonyl-CoA to butyryl-CoA. It uses only NADP as electron donor. May have a role in providing butyryl-CoA as a starter unit for straight-chain fatty acid biosynthesis. This chain is Crotonyl-CoA reductase (ccrA2), found in Streptomyces avermitilis (strain ATCC 31267 / DSM 46492 / JCM 5070 / NBRC 14893 / NCIMB 12804 / NRRL 8165 / MA-4680).